A 324-amino-acid chain; its full sequence is Beta-ketoacyl-[acyl-carrier-protein] synthase III (324 aa).

Residues cysteine 112 and histidine 249 contribute to the active site. The ACP-binding stretch occupies residues 250–254 (QANDR). Asparagine 279 is a catalytic residue.

This sequence belongs to the thiolase-like superfamily. FabH family. Homodimer.

The protein localises to the cytoplasm. It catalyses the reaction malonyl-[ACP] + acetyl-CoA + H(+) = 3-oxobutanoyl-[ACP] + CO2 + CoA. It participates in lipid metabolism; fatty acid biosynthesis. In terms of biological role, catalyzes the condensation reaction of fatty acid synthesis by the addition to an acyl acceptor of two carbons from malonyl-ACP. Catalyzes the first condensation reaction which initiates fatty acid synthesis and may therefore play a role in governing the total rate of fatty acid production. Possesses both acetoacetyl-ACP synthase and acetyl transacylase activities. Its substrate specificity determines the biosynthesis of branched-chain and/or straight-chain of fatty acids. This Streptococcus pneumoniae serotype 19F (strain G54) protein is Beta-ketoacyl-[acyl-carrier-protein] synthase III.